The primary structure comprises 217 residues: Nuclear transcription factor Y subunit C-3 (217 aa).

The segment covering 1–28 (MDQQGQSSAMNYGSNPYQTNAMTTTPTG) has biased composition (polar residues). Disordered regions lie at residues 1–29 (MDQQGQSSAMNYGSNPYQTNAMTTTPTGS) and 198–217 (PYMGQPMWQQPGPEQQDPDN).

It belongs to the NFYC/HAP5 subunit family. Heterotrimeric transcription factor composed of three components, NF-YA, NF-YB and NF-YC. NF-YB and NF-YC must interact and dimerize for NF-YA association and DNA binding. As to expression, ubiquitous.

It localises to the nucleus. Stimulates the transcription of various genes by recognizing and binding to a CCAAT motif in promoters. The protein is Nuclear transcription factor Y subunit C-3 (NFYC3) of Arabidopsis thaliana (Mouse-ear cress).